Consider the following 111-residue polypeptide: Putative lipid-binding protein AIR1 (111 aa).

The first 23 residues, 1–23 (MAPRTPLALFVSLNLLFFTYTSA), serve as a signal peptide directing secretion. Disulfide bonds link cysteine 28–cysteine 58, cysteine 38–cysteine 57, and cysteine 74–cysteine 110.

This sequence belongs to the plant LTP family. PEARLI1 subfamily.

It is found in the secreted. The protein is Putative lipid-binding protein AIR1 (AIR1) of Arabidopsis thaliana (Mouse-ear cress).